Consider the following 159-residue polypeptide: Ribosomal RNA large subunit methyltransferase H (159 aa).

S-adenosyl-L-methionine contacts are provided by residues Leu76, Gly108, and 127-132; that span reads FSKMTF.

It belongs to the RNA methyltransferase RlmH family. As to quaternary structure, homodimer.

The protein resides in the cytoplasm. It catalyses the reaction pseudouridine(1915) in 23S rRNA + S-adenosyl-L-methionine = N(3)-methylpseudouridine(1915) in 23S rRNA + S-adenosyl-L-homocysteine + H(+). Its function is as follows. Specifically methylates the pseudouridine at position 1915 (m3Psi1915) in 23S rRNA. This is Ribosomal RNA large subunit methyltransferase H from Shouchella clausii (strain KSM-K16) (Alkalihalobacillus clausii).